A 509-amino-acid chain; its full sequence is Phosphoglycerate kinase, glycosomal (509 aa).

12 residues coordinate (2R)-3-phosphoglycerate: valine 32, aspartate 33, phenylalanine 34, asparagine 35, arginine 48, serine 70, histidine 71, glycine 73, arginine 74, arginine 224, histidine 260, and arginine 261. Glycine 306 lines the ADP pocket. Glycine 306 lines the CDP pocket. Lysine 308 contacts (2R)-3-phosphoglycerate. An AMP-binding site is contributed by lysine 308. Aspartate 311 contacts CDP. Aspartate 311 is a Mg(2+) binding site. ADP contacts are provided by lysine 312 and glycine 330. Residue lysine 312 participates in AMP binding. Lysine 312 lines the ATP pocket. Residue glycine 330 participates in CDP binding. Residues alanine 331 and alanine 403 each coordinate AMP. Residues alanine 331 and alanine 403 each coordinate ATP. 2 residues coordinate ADP: alanine 403 and asparagine 427. Residues glycine 428 and phenylalanine 433 each coordinate CDP. ADP-binding residues include phenylalanine 433, glutamate 434, aspartate 466, and serine 467. Glutamate 434 contributes to the AMP binding site. ATP-binding residues include glutamate 434, aspartate 466, and serine 467. Aspartate 466 is a binding site for Mg(2+).

It belongs to the phosphoglycerate kinase family. Monomer. It depends on Mg(2+) as a cofactor.

The protein resides in the glycosome. The catalysed reaction is (2R)-3-phosphoglycerate + ATP = (2R)-3-phospho-glyceroyl phosphate + ADP. It participates in carbohydrate degradation; glycolysis; pyruvate from D-glyceraldehyde 3-phosphate: step 2/5. The polypeptide is Phosphoglycerate kinase, glycosomal (56PGK) (Trypanosoma congolense).